The primary structure comprises 677 residues: Sulfate transporter 2.2 (677 aa).

Residues 1–110 are Cytoplasmic-facing; the sequence is MQLSSLSHTS…QYKLNLFKKD (110 aa). A helical membrane pass occupies residues 111-131; that stretch reads LMAGLTLASLCIPQSIGYANL. The Extracellular portion of the chain corresponds to 132-133; the sequence is AG. A helical membrane pass occupies residues 134-154; it reads LDPEYGLYTSVVPPLIYSTMG. The Cytoplasmic portion of the chain corresponds to 155-158; sequence TSRE. The helical transmembrane segment at 159 to 179 threads the bilayer; the sequence is LAIGPVAVVSLLLSSMVRDLQ. The Extracellular portion of the chain corresponds to 180–190; it reads DPVTDPIAYRK. Residues 191–211 traverse the membrane as a helical segment; that stretch reads IVFTVTFFAGAFQAIFGLFRL. The Cytoplasmic segment spans residues 212-213; sequence GF. A helical membrane pass occupies residues 214 to 234; that stretch reads LVDFLSHAALVGFMAGAAIVI. Over 235-270 the chain is Extracellular; sequence GLQQLKGLFGLTHFTNKTDVVSVLSSVFHSLHHPWQ. N250 carries an N-linked (GlcNAc...) asparagine glycan. A helical transmembrane segment spans residues 271–291; it reads PLNFVIGSSFLIFILLARFIG. The Cytoplasmic portion of the chain corresponds to 292–296; it reads KRNNK. A helical transmembrane segment spans residues 297-317; it reads LFWIPAMAPLISVVLATLIVY. The Extracellular segment spans residues 318-352; the sequence is LSNAESRGVKIVKHIKPGFNQLSVNQLQFKSPHLG. The chain crosses the membrane as a helical span at residues 353–373; the sequence is QIAKIGLISAIIALTEAIAVG. Over 374–389 the chain is Cytoplasmic; that stretch reads RSFATIKGYRLDGNKE. Residues 390 to 410 form a helical membrane-spanning segment; sequence MMAMGFMNIAGSLSSCYVATG. Residues 411–422 are Extracellular-facing; the sequence is SFSRTAVNFSAG. N418 carries an N-linked (GlcNAc...) asparagine glycan. Residues 423–443 traverse the membrane as a helical segment; it reads CETVVSNIVMAITVMISLEVL. At 444 to 446 the chain is on the cytoplasmic side; that stretch reads TRF. The chain crosses the membrane as a helical span at residues 447 to 467; it reads LYFTPTAILASIILSALPGLI. Topologically, residues 468-482 are extracellular; sequence DVSGALHIWKLDKLD. The helical transmembrane segment at 483-503 threads the bilayer; sequence FLVLIAAFFGVLFASVEIGLL. Topologically, residues 504-677 are cytoplasmic; the sequence is LAVGISFARI…RARSTSHELC (174 aa). Residues 540-666 form the STAS domain; the sequence is YPMANKTAGL…MTVGEAVDIY (127 aa).

Belongs to the SLC26A/SulP transporter (TC 2.A.53) family. As to expression, expressed in the phloem in roots and in the phloem of vascular bundles in leaves.

It localises to the membrane. In terms of biological role, low-affinity H(+)/sulfate cotransporter that may be involved in the distribution of sulfate from vascular bundles to the palisade cells of the leaves. Plays a central role in the regulation of sulfate assimilation. This is Sulfate transporter 2.2 (SULTR2;2) from Arabidopsis thaliana (Mouse-ear cress).